The sequence spans 34 residues: Photosystem II reaction center protein M (34 aa).

Residues 5–25 (ILALIAVALFISIPTAFLVII) form a helical membrane-spanning segment.

This sequence belongs to the PsbM family. In terms of assembly, PSII is composed of 1 copy each of membrane proteins PsbA, PsbB, PsbC, PsbD, PsbE, PsbF, PsbH, PsbI, PsbJ, PsbK, PsbL, PsbM, PsbT, PsbX, PsbY, PsbZ, Psb30/Ycf12, at least 3 peripheral proteins of the oxygen-evolving complex and a large number of cofactors. It forms dimeric complexes.

The protein localises to the plastid. Its subcellular location is the chloroplast thylakoid membrane. In terms of biological role, one of the components of the core complex of photosystem II (PSII). PSII is a light-driven water:plastoquinone oxidoreductase that uses light energy to abstract electrons from H(2)O, generating O(2) and a proton gradient subsequently used for ATP formation. It consists of a core antenna complex that captures photons, and an electron transfer chain that converts photonic excitation into a charge separation. This subunit is found at the monomer-monomer interface. The chain is Photosystem II reaction center protein M from Welwitschia mirabilis (Tree tumbo).